The chain runs to 140 residues: Granulocyte-macrophage colony-stimulating factor (140 aa).

Residues 1 to 17 (MWLQNLLLLGTVVCSIC) form the signal peptide. Ser-24 carries an O-linked (GalNAc...) serine glycan. Thr-27 is a glycosylation site (O-linked (GalNAc...) threonine). N-linked (GlcNAc...) asparagine glycosylation is found at Asn-45, Asn-55, and Asn-87. 2 disulfide bridges follow: Cys-72–Cys-114 and Cys-106–Cys-139.

This sequence belongs to the GM-CSF family. In terms of assembly, monomer. The signaling GM-CSF receptor complex is a dodecamer of two head-to-head hexamers of two alpha, two beta, and two ligand subunits.

The protein resides in the secreted. In terms of biological role, cytokine that stimulates the growth and differentiation of hematopoietic precursor cells from various lineages, including granulocytes, macrophages, eosinophils and erythrocytes. The polypeptide is Granulocyte-macrophage colony-stimulating factor (CSF2) (Cavia porcellus (Guinea pig)).